We begin with the raw amino-acid sequence, 247 residues long: Disease resistance protein BAK6 (247 aa).

Positions Met-1–Cys-24 are cleaved as a signal peptide. Asn-66, Asn-104, and Asn-113 each carry an N-linked (GlcNAc...) asparagine glycan. 6 LRR repeats span residues Leu-90–Leu-114, Asp-116–Ile-138, Ser-139–Asn-161, Leu-162–Ile-186, Ser-188–Leu-210, and Val-213–Val-237. 2 N-linked (GlcNAc...) asparagine glycosylation sites follow: Asn-150 and Asn-161. Asn-215 is a glycosylation site (N-linked (GlcNAc...) asparagine).

Interacts with WAK17 isoform 1; the interaction is direct. As to quaternary structure, (Microbial infection) Interacts with G.zeae CFEM1; the interaction is direct. Interacts with G.zeae CFEMN1; the interaction is direct. Interacts with G.zeae CFEM5; the interaction is direct.

In terms of biological role, contributes to activation of the hypersensitive response, a form of programmed cell death, upon fungal infection. May sense the presence of fungal material and relay the signal to WAK17 isoform 1. In Zea mays (Maize), this protein is Disease resistance protein BAK6.